The primary structure comprises 122 residues: Large ribosomal subunit protein uL14 (122 aa).

It belongs to the universal ribosomal protein uL14 family. As to quaternary structure, part of the 50S ribosomal subunit. Forms a cluster with proteins L3 and L19. In the 70S ribosome, L14 and L19 interact and together make contacts with the 16S rRNA in bridges B5 and B8.

In terms of biological role, binds to 23S rRNA. Forms part of two intersubunit bridges in the 70S ribosome. The sequence is that of Large ribosomal subunit protein uL14 from Teredinibacter turnerae (strain ATCC 39867 / T7901).